Here is a 411-residue protein sequence, read N- to C-terminus: LIM domain-binding protein 1 (411 aa).

2 disordered regions span residues proline 284–leucine 330 and aspartate 367–glutamine 411. Positions serine 302–asparagine 318 are enriched in low complexity. Positions aspartate 336–glutamate 375 constitute an LIM interaction domain (LID) domain.

This sequence belongs to the LDB family. As to quaternary structure, forms homodimers and heterodimers. First expressed at stages 15-16 in presumptive limb mesoderm. As limb outgrowth proceeds, expressed in the entire limb bud, concentrating in the distal mesoderm throughout limb development. Both hindlimbs and forelimbs exhibit similar expression patterns.

It localises to the nucleus. In terms of biological role, binds to the LIM domain of a wide variety of LIM domain-containing transcription factors. This chain is LIM domain-binding protein 1, found in Gallus gallus (Chicken).